Here is a 150-residue protein sequence, read N- to C-terminus: D-aminoacyl-tRNA deacylase (150 aa).

A Gly-cisPro motif, important for rejection of L-amino acids motif is present at residues 138-139 (GP).

Belongs to the DTD family. In terms of assembly, homodimer.

It localises to the cytoplasm. The catalysed reaction is glycyl-tRNA(Ala) + H2O = tRNA(Ala) + glycine + H(+). It catalyses the reaction a D-aminoacyl-tRNA + H2O = a tRNA + a D-alpha-amino acid + H(+). An aminoacyl-tRNA editing enzyme that deacylates mischarged D-aminoacyl-tRNAs. Also deacylates mischarged glycyl-tRNA(Ala), protecting cells against glycine mischarging by AlaRS. Acts via tRNA-based rather than protein-based catalysis; rejects L-amino acids rather than detecting D-amino acids in the active site. By recycling D-aminoacyl-tRNA to D-amino acids and free tRNA molecules, this enzyme counteracts the toxicity associated with the formation of D-aminoacyl-tRNA entities in vivo and helps enforce protein L-homochirality. The chain is D-aminoacyl-tRNA deacylase from Bacteroides fragilis (strain YCH46).